The chain runs to 544 residues: Spore germination protein KA (544 aa).

Positions 1-36 are disordered; it reads MPLFSKRKNNTDSKDKQNTDERNQEQQQEKERPVLI. The span at 9–33 shows a compositional bias: basic and acidic residues; that stretch reads NNTDSKDKQNTDERNQEQQQEKERP. Transmembrane regions (helical) follow at residues 279–299, 321–341, 392–412, 416–436, and 443–463; these read FAII…FVQF, VLVF…TTFH, AVSI…GIVS, VIIV…AMAI, and FIFI…GIIM. A compositionally biased stretch (basic and acidic residues) spans 504 to 523; sequence KRPESVSKEDKVRQGKDQRP. The disordered stretch occupies residues 504-544; it reads KRPESVSKEDKVRQGKDQRPEPAASRGMVNKDLEEGDQNGT.

This sequence belongs to the GerABKA family.

The protein localises to the cell membrane. Its function is as follows. Involved in the germination response to the combination of glucose, fructose, L-asparagine, and KCl. The chain is Spore germination protein KA (gerKA) from Bacillus subtilis (strain 168).